A 607-amino-acid chain; its full sequence is Elongation factor 4 (607 aa).

A tr-type G domain is found at 11 to 193 (EKIRNFSIIA…QIVEKVPAPQ (183 aa)). Residues 23 to 28 (DHGKST) and 140 to 143 (NKID) contribute to the GTP site.

This sequence belongs to the TRAFAC class translation factor GTPase superfamily. Classic translation factor GTPase family. LepA subfamily.

The protein localises to the cell membrane. It carries out the reaction GTP + H2O = GDP + phosphate + H(+). Required for accurate and efficient protein synthesis under certain stress conditions. May act as a fidelity factor of the translation reaction, by catalyzing a one-codon backward translocation of tRNAs on improperly translocated ribosomes. Back-translocation proceeds from a post-translocation (POST) complex to a pre-translocation (PRE) complex, thus giving elongation factor G a second chance to translocate the tRNAs correctly. Binds to ribosomes in a GTP-dependent manner. In Lactococcus lactis subsp. lactis (strain IL1403) (Streptococcus lactis), this protein is Elongation factor 4.